The primary structure comprises 151 residues: Acidic phospholipase A2 1 (151 aa).

The first 27 residues, 1-27 (MYPAHLLVLLAVCVSLLGAASIPARPL), serve as a signal peptide directing secretion. Intrachain disulfides connect cysteine 38/cysteine 104, cysteine 54/cysteine 151, cysteine 56/cysteine 72, cysteine 71/cysteine 132, cysteine 78/cysteine 125, cysteine 88/cysteine 118, and cysteine 111/cysteine 123. 3 residues coordinate Ca(2+): tyrosine 55, glycine 57, and glycine 59. Residue histidine 75 is part of the active site. Aspartate 76 provides a ligand contact to Ca(2+). Residue aspartate 126 is part of the active site.

The protein belongs to the phospholipase A2 family. Group I subfamily. D49 sub-subfamily. It depends on Ca(2+) as a cofactor. Expressed by the venom gland.

It localises to the secreted. It carries out the reaction a 1,2-diacyl-sn-glycero-3-phosphocholine + H2O = a 1-acyl-sn-glycero-3-phosphocholine + a fatty acid + H(+). PLA2 catalyzes the calcium-dependent hydrolysis of the 2-acyl groups in 3-sn-phosphoglycerides. The protein is Acidic phospholipase A2 1 of Tropidechis carinatus (Australian rough-scaled snake).